A 220-amino-acid polypeptide reads, in one-letter code: tRNA (guanine-N(7)-)-methyltransferase (220 aa).

Positions 42, 67, and 122 each coordinate S-adenosyl-L-methionine. Asp-122 is an active-site residue. Residues Lys-126, Asp-158, and 198–201 each bind substrate; that span reads TEYE.

It belongs to the class I-like SAM-binding methyltransferase superfamily. TrmB family.

It catalyses the reaction guanosine(46) in tRNA + S-adenosyl-L-methionine = N(7)-methylguanosine(46) in tRNA + S-adenosyl-L-homocysteine. Its pathway is tRNA modification; N(7)-methylguanine-tRNA biosynthesis. Functionally, catalyzes the formation of N(7)-methylguanine at position 46 (m7G46) in tRNA. The sequence is that of tRNA (guanine-N(7)-)-methyltransferase from Mycoplasma capricolum subsp. capricolum (strain California kid / ATCC 27343 / NCTC 10154).